A 586-amino-acid polypeptide reads, in one-letter code: 3-hydroxy-3-methylglutaryl-coenzyme A reductase 3 (586 aa).

The next 2 helical transmembrane spans lie at 36 to 59 (PSDYSLPLSLYLANALVFSLFFSV) and 87 to 107 (ALICLVASVIYLLGFFGIGFV). Residues 108–170 (HSFSRASTDS…STTTTSTLSD (63 aa)) form a linker region. Catalytic regions lie at residues 171–586 (DDEQ…KITF) and 172–586 (DEQI…KITF). Catalysis depends on charge relay system residues E265, K397, and D473. H571 functions as the Proton donor in the catalytic mechanism. N575 carries an N-linked (GlcNAc...) asparagine glycan.

Belongs to the HMG-CoA reductase family.

It localises to the endoplasmic reticulum membrane. It is found in the mitochondrion membrane. Its subcellular location is the plastid membrane. The enzyme catalyses (R)-mevalonate + 2 NADP(+) + CoA = (3S)-3-hydroxy-3-methylglutaryl-CoA + 2 NADPH + 2 H(+). It functions in the pathway metabolic intermediate biosynthesis; (R)-mevalonate biosynthesis; (R)-mevalonate from acetyl-CoA: step 3/3. Its function is as follows. Catalyzes the synthesis of mevalonate. The specific precursor of all isoprenoid compounds present in plants. This is 3-hydroxy-3-methylglutaryl-coenzyme A reductase 3 (HMGR3) from Hevea brasiliensis (Para rubber tree).